The primary structure comprises 1964 residues: Probable helicase with zinc finger domain (1964 aa).

A C3H1-type zinc finger spans residues 178–206 (SEEYTLCKRFLEQGICRYGAQCTSAHSQE). At Ser-248 the chain carries Phosphoserine. Residue 668-675 (GPYGTGKT) participates in ATP binding. A DEAA box motif is present at residues 794–797 (DEAA). The segment covering 1116-1127 (HSGNSSRQQQSP) has biased composition (polar residues). Positions 1116–1135 (HSGNSSRQQQSPPKVKSLYH) are disordered. A Phosphothreonine modification is found at Thr-1163. Arg-1245 carries the omega-N-methylarginine modification. Disordered regions lie at residues 1248–1350 (PIPY…LPAP), 1360–1379 (HFHP…QPHT), 1388–1449 (LPEQ…QAGP), 1463–1491 (QSPA…RAIT), 1631–1655 (QVQP…QFAN), and 1743–1964 (QHAA…SYFK). Composition is skewed to basic and acidic residues over residues 1268-1281 (HAEK…RNGK) and 1292-1308 (NKIR…KQVD). Residues 1365 to 1374 (PQLPRPPFPA) show a composition bias toward pro residues. Over residues 1388–1431 (LPEQPNQMAPQPNQVAPQPNQMTPQPNQVAPQPNQVVQQQSQAP) the composition is skewed to low complexity. Pro residues predominate over residues 1635-1644 (RSPPAVPSPP). Residues Ser-1636, Ser-1760, Ser-1763, and Ser-1788 each carry the phosphoserine modification. Residues 1755–1765 (SSRTVSASSLP) are compositionally biased toward polar residues. Polar residues-rich tracts occupy residues 1799 to 1813 (PQDS…QGHS) and 1826 to 1849 (WANT…TSQP). Over residues 1860–1870 (KPPEDQLKPES) the composition is skewed to basic and acidic residues. 2 stretches are compositionally biased toward polar residues: residues 1872–1881 (EVSSSFNYSM) and 1897–1910 (IAES…QSPA). The segment covering 1941–1956 (PLSLLQELSLGSSPGS) has biased composition (low complexity).

The protein belongs to the DNA2/NAM7 helicase family. In terms of assembly, interacts with POLR2A. Interacts with SMYD3; the interaction may bridge SMYD3 and RNA polymerase II. Interacts with SMYD2.

The protein resides in the nucleus. May act as a helicase that plays a role in RNA metabolism in multiple tissues and organs within the developing embryo. This is Probable helicase with zinc finger domain (Helz) from Mus musculus (Mouse).